Consider the following 217-residue polypeptide: Killer cell lectin-like receptor subfamily B member 1F (217 aa).

Residues 1–45 (MDTSRVYGNVKTFRSPGHKQASFPSLSTDACRCPHWHHLALKLGC) are Cytoplasmic-facing. Positions 31 to 34 (CRCP) match the LCK-binding motif motif. The helical; Signal-anchor for type II membrane protein transmembrane segment at 46-66 (ATLILLLLTLIGLSVFVRFLV) threads the bilayer. Over 67-217 (QKPLIEKCSM…WICQKTLKHV (151 aa)) the chain is Extracellular. The region spanning 101-211 (HRNKCLIISQ…CSSDNHWICQ (111 aa)) is the C-type lectin domain. Disulfide bonds link Cys122/Cys210 and Cys189/Cys202.

Expressed in natural killer cells and a subset of T-cells.

It localises to the membrane. Its function is as follows. Binds CLEC2I/Clr-g leading to activation of natural killer cells or stimulation of IL-2 production and proliferation of T-cells in response to antigen stimulation. May contribute to the formation of the immunological synapse between T-cells and antigen-presenting dendritic cells. This is Killer cell lectin-like receptor subfamily B member 1F from Rattus norvegicus (Rat).